We begin with the raw amino-acid sequence, 515 residues long: GMP synthase [glutamine-hydrolyzing] (515 aa).

Residues 6 to 198 (KVIILDFGSQ…VFKVAGLKAD (193 aa)) enclose the Glutamine amidotransferase type-1 domain. Catalysis depends on cysteine 83, which acts as the Nucleophile. Residues histidine 172 and glutamate 174 contribute to the active site. Residues 199–390 (WTMSSFVENC…LGLPEFIIWR (192 aa)) enclose the GMPS ATP-PPase domain. 226-232 (SGGIDST) provides a ligand contact to ATP.

Homodimer.

It carries out the reaction XMP + L-glutamine + ATP + H2O = GMP + L-glutamate + AMP + diphosphate + 2 H(+). The protein operates within purine metabolism; GMP biosynthesis; GMP from XMP (L-Gln route): step 1/1. Its function is as follows. Catalyzes the synthesis of GMP from XMP. The polypeptide is GMP synthase [glutamine-hydrolyzing] (Maridesulfovibrio salexigens (strain ATCC 14822 / DSM 2638 / NCIMB 8403 / VKM B-1763) (Desulfovibrio salexigens)).